The sequence spans 373 residues: Leucine aminopeptidase 1 (373 aa).

An N-terminal signal peptide occupies residues 1-18 (MKLLSVLALSATATSVLG). An N-linked (GlcNAc...) asparagine glycan is attached at Asn-136. 2 residues coordinate Zn(2+): His-176 and Asp-195. Asn-196 carries N-linked (GlcNAc...) asparagine glycosylation. Residues Glu-234 and Asp-261 each coordinate Zn(2+). Asn-284 carries an N-linked (GlcNAc...) asparagine glycan. A disulfide bridge connects residues Cys-310 and Cys-314. His-343 provides a ligand contact to Zn(2+).

Belongs to the peptidase M28 family. M28E subfamily. Monomer. Requires Zn(2+) as cofactor.

It is found in the secreted. Functionally, extracellular aminopeptidase which contributes to pathogenicity. The chain is Leucine aminopeptidase 1 (LAP1) from Trichophyton equinum (Horse ringworm fungus).